Here is a 202-residue protein sequence, read N- to C-terminus: dTTP/UTP pyrophosphatase (202 aa).

Aspartate 83 acts as the Proton acceptor in catalysis.

The protein belongs to the Maf family. YhdE subfamily. The cofactor is a divalent metal cation.

Its subcellular location is the cytoplasm. The enzyme catalyses dTTP + H2O = dTMP + diphosphate + H(+). It catalyses the reaction UTP + H2O = UMP + diphosphate + H(+). Functionally, nucleoside triphosphate pyrophosphatase that hydrolyzes dTTP and UTP. May have a dual role in cell division arrest and in preventing the incorporation of modified nucleotides into cellular nucleic acids. The protein is dTTP/UTP pyrophosphatase of Polaromonas sp. (strain JS666 / ATCC BAA-500).